We begin with the raw amino-acid sequence, 738 residues long: Interleukin-12 receptor subunit beta-1 (738 aa).

The N-terminal stretch at 1–19 is a signal peptide; it reads MDMMGLAGTSKHITFLLLC. Residues 20-565 lie on the Extracellular side of the membrane; it reads QLGASGPGDG…QRFSFEVQIS (546 aa). 5 consecutive Fibronectin type-III domains span residues 47 to 152, 152 to 258, 259 to 359, 360 to 465, and 469 to 565; these read GPRN…TPPL, LGHI…PEVL, PQAK…LPAQ, ELTE…GNAS, and TPRH…VQIS. An N-linked (GlcNAc...) asparagine glycan is attached at Asn-50. A disulfide bond links Cys-53 and Cys-63. N-linked (GlcNAc...) asparagine glycosylation is found at Asn-73, Asn-86, Asn-130, Asn-144, Asn-169, and Asn-188. The short motif at 244–248 is the WSXWS motif element; the sequence is WSDWS. N-linked (GlcNAc...) asparagine glycosylation is found at Asn-330, Asn-368, Asn-374, Asn-401, Asn-463, and Asn-477. A helical membrane pass occupies residues 566–591; it reads RLSIIFASLGSFASVLLVGSLGYIGL. The Cytoplasmic segment spans residues 592-738; sequence NRAAWHLCPP…PGPPTLGQEA (147 aa). The Box 1 motif signature appears at 598 to 606; that stretch reads LCPPLPTPC.

This sequence belongs to the type I cytokine receptor family. Type 2 subfamily. As to quaternary structure, dimer or oligomer; disulfide-linked. Interacts with IL12RB2 to form the high affinity IL12 receptor. Heterodimer with IL23R; in presence of IL23. The heterodimer forms the IL23 receptor.

The protein localises to the membrane. Functions as an interleukin receptor which binds interleukin-12 with low affinity and is involved in IL12 transduction. Associated with IL12RB2 it forms a functional, high affinity receptor for IL12. Also associates with IL23R to form the interleukin-23 receptor which functions in IL23 signal transduction probably through activation of the Jak-Stat signaling cascade. The chain is Interleukin-12 receptor subunit beta-1 (Il12rb1) from Mus musculus (Mouse).